We begin with the raw amino-acid sequence, 93 residues long: Class II hydrophobin 1 (93 aa).

Positions 1–16 are cleaved as a signal peptide; that stretch reads MKFFAVAALFVASAMA. Intrachain disulfides connect Cys24/Cys74, Cys35/Cys65, Cys36/Cys48, and Cys75/Cys86.

The protein belongs to the cerato-ulmin hydrophobin family. Interacts with maize ubiquilin 1-like (UBL) protein. Homotetramer. Further self-assembles to form highly ordered films at water-air interfaces through intermolecular interactions.

It localises to the cell membrane. In terms of biological role, aerial growth, conidiation, and dispersal of filamentous fungi in the environment rely upon a capability of their secreting small amphipathic proteins called hydrophobins (HPBs) with low sequence identity. Class I can self-assemble into an outermost layer of rodlet bundles on aerial cell surfaces, conferring cellular hydrophobicity that supports fungal growth, development and dispersal; whereas Class II form highly ordered films at water-air interfaces through intermolecular interactions but contribute nothing to the rodlet structure. Hyd1 is a class II hydrophobin that acts as an elicitor of induced systemic resistance (ISR) in plants. During interaction with the plant, binds with the maize target protein UBL in order to recruit more UBL proteins in maize roots to elicit plant defense responses, including cell death as well as brassinosteroid, jasmonate (JA) and ethylene (ET) signaling. In Trichoderma harzianum (Hypocrea lixii), this protein is Class II hydrophobin 1.